The chain runs to 413 residues: Tubby-like F-box protein 6 (413 aa).

The region spanning 67 to 122 is the F-box domain; sequence SIWVDLPPELLLDIIQRIESEQSLWPGRRDVVACASVCKSWREMTKEVVKVPELSG.

It belongs to the TUB family. As to expression, ubiquitous, with higher levels in flowers.

In Arabidopsis thaliana (Mouse-ear cress), this protein is Tubby-like F-box protein 6.